The following is a 321-amino-acid chain: Pectinesterase (321 aa).

Thr1 is modified (N-acetylthreonine). Asn75 carries an N-linked (GlcNAc...) (complex) asparagine glycan. Substrate-binding residues include Thr84 and Gln114. Asp137 serves as the catalytic Proton donor. A disulfide bond links Cys151 and Cys171. Catalysis depends on Asp158, which acts as the Nucleophile. Substrate-binding residues include Arg226 and Trp228. N-linked (GlcNAc...) (complex) asparagine glycans are attached at residues Asn275, Asn290, and Asn319.

It belongs to the pectinesterase family. The N-glycans attached at Asn-75, Asn-275, Asn-290 and Asn-319 are complex oligosaccharides containing xylose, fucose, hexose and N-acetylglucosamine.

The enzyme catalyses [(1-&gt;4)-alpha-D-galacturonosyl methyl ester](n) + n H2O = [(1-&gt;4)-alpha-D-galacturonosyl](n) + n methanol + n H(+). It functions in the pathway glycan metabolism; pectin degradation; 2-dehydro-3-deoxy-D-gluconate from pectin: step 1/5. Its activity is regulated as follows. Inhibited by PMEI. This chain is Pectinesterase, found in Actinidia deliciosa (Kiwi).